A 309-amino-acid polypeptide reads, in one-letter code: MEFKHIPVLLKETIDSLNIKQDGVYVDCTLGGGGHSLEILKRLSDKGKLIAIDQDISAINWSEERLKNFKNIIYVHDNFYNIQQILKELKIDKVDGIIMDLGVSSYQLDEGKRGFSYMKDAPLDMRMNRDSSLSAYEIVNQYNEEELCRIIRDYGEENFSRRISKFIVKAREESPISTTLQLVGIIKKAIPLKFQKEGHPAKRTFQAIRIEVNEELKILDKAVEDGVANLNTGGRIAIITFHSLEDRIIKSKFKMLENPCTCPADFPICICGKKPIVKIVNKKPIVPTEEEKSINPRSKSSKLRIAERI.

S-adenosyl-L-methionine is bound by residues 33 to 35 (GGH), Asp-53, Phe-79, Asp-100, and Gln-107.

Belongs to the methyltransferase superfamily. RsmH family.

Its subcellular location is the cytoplasm. It catalyses the reaction cytidine(1402) in 16S rRNA + S-adenosyl-L-methionine = N(4)-methylcytidine(1402) in 16S rRNA + S-adenosyl-L-homocysteine + H(+). In terms of biological role, specifically methylates the N4 position of cytidine in position 1402 (C1402) of 16S rRNA. This Clostridium kluyveri (strain NBRC 12016) protein is Ribosomal RNA small subunit methyltransferase H.